Here is a 396-residue protein sequence, read N- to C-terminus: MKKLLKSVLVFAALSSASSLQALPVGNPAEPSLMIDGILWEGFGGDPCDPCTTWCDAISMRMGYYGDFVFDRVLKTDVNKEFQMGAAPTTRDVAGLEKDPVVNVARPNPAYGKHMQDAEMFTNAAYMALNIWDRFDVFCTLGATTGYLKGNSASFNLVGLFGTKTQSSGFDTANIVPNTALNQAVVELYTDTTFAWSVGARAALWECGCATLGASFQYAQSKPKVEELNVLCNASEFTINKPKGYVGAEFPLDITAGTEAATGTKDASIDYHEWQASLALSYRLNMFTPYIGVKWSRVSFDADTIRIAQPKLAKPVLDTTTLNPTIAGKGTVVSSAENELADTMQIVSLQLNKMKSRKSCGIAVGTTIVDADKYAVTVETRLIDERAAHVNAQFRF.

The first 22 residues, Met1–Ala22, serve as a signal peptide directing secretion.

The protein belongs to the chlamydial porin (CP) (TC 1.B.2) family. In terms of assembly, part of a disulfide cross-linked outer membrane complex (COMC) composed of the major outer membrane porin (MOMP), the small cysteine-rich protein (OmcA) and the large cysteine-rich periplasmic protein (OmcB).

It localises to the cell outer membrane. Functionally, in elementary bodies (EBs, the infectious stage, which is able to survive outside the host cell) provides the structural integrity of the outer envelope through disulfide cross-links with the small cysteine-rich protein and the large cysteine-rich periplasmic protein. It has been described in publications as the Sarkosyl-insoluble COMC (Chlamydia outer membrane complex), and serves as the functional equivalent of peptidoglycan. Its function is as follows. Permits diffusion of specific solutes through the outer membrane. This Chlamydia trachomatis protein is Major outer membrane porin, serovar A (ompA).